A 437-amino-acid polypeptide reads, in one-letter code: Trigger factor (437 aa).

The PPIase FKBP-type domain occupies 174–260 (GDFVQISFEG…VKSLKKKIFP (87 aa)).

This sequence belongs to the FKBP-type PPIase family. Tig subfamily.

The protein localises to the cytoplasm. The catalysed reaction is [protein]-peptidylproline (omega=180) = [protein]-peptidylproline (omega=0). Functionally, involved in protein export. Acts as a chaperone by maintaining the newly synthesized protein in an open conformation. Functions as a peptidyl-prolyl cis-trans isomerase. The protein is Trigger factor of Koribacter versatilis (strain Ellin345).